The following is a 353-amino-acid chain: tRNA N6-adenosine threonylcarbamoyltransferase (353 aa).

Fe cation contacts are provided by His109 and His113. Residues 136–140 (TVSGG), Asp169, Gly182, Asp186, and Asn284 each bind substrate. A Fe cation-binding site is contributed by Asp312.

It belongs to the KAE1 / TsaD family. Requires Fe(2+) as cofactor.

The protein localises to the cytoplasm. It catalyses the reaction L-threonylcarbamoyladenylate + adenosine(37) in tRNA = N(6)-L-threonylcarbamoyladenosine(37) in tRNA + AMP + H(+). In terms of biological role, required for the formation of a threonylcarbamoyl group on adenosine at position 37 (t(6)A37) in tRNAs that read codons beginning with adenine. Is involved in the transfer of the threonylcarbamoyl moiety of threonylcarbamoyl-AMP (TC-AMP) to the N6 group of A37, together with TsaE and TsaB. TsaD likely plays a direct catalytic role in this reaction. This chain is tRNA N6-adenosine threonylcarbamoyltransferase, found in Chlorobaculum tepidum (strain ATCC 49652 / DSM 12025 / NBRC 103806 / TLS) (Chlorobium tepidum).